Reading from the N-terminus, the 695-residue chain is NAD(P)H-quinone oxidoreductase subunit 5, chloroplastic (695 aa).

15 consecutive transmembrane segments (helical) span residues Trp1–Phe21, Trp32–Ile52, Ile81–Ile101, Phe117–Ile137, Ile139–Thr159, Gly177–Phe197, Asn211–Ala231, Thr250–Ala270, Val278–Ala298, Leu319–Ile339, Ala346–Ser366, Ile388–Ser408, Trp417–Tyr437, Leu535–Phe555, and Val594–Ile614.

This sequence belongs to the complex I subunit 5 family. In terms of assembly, NDH is composed of at least 16 different subunits, 5 of which are encoded in the nucleus.

It localises to the plastid. The protein resides in the chloroplast thylakoid membrane. The catalysed reaction is a plastoquinone + NADH + (n+1) H(+)(in) = a plastoquinol + NAD(+) + n H(+)(out). It catalyses the reaction a plastoquinone + NADPH + (n+1) H(+)(in) = a plastoquinol + NADP(+) + n H(+)(out). Its function is as follows. NDH shuttles electrons from NAD(P)H:plastoquinone, via FMN and iron-sulfur (Fe-S) centers, to quinones in the photosynthetic chain and possibly in a chloroplast respiratory chain. The immediate electron acceptor for the enzyme in this species is believed to be plastoquinone. Couples the redox reaction to proton translocation, and thus conserves the redox energy in a proton gradient. In Capsicum baccatum (Peruvian pepper), this protein is NAD(P)H-quinone oxidoreductase subunit 5, chloroplastic (ndhF).